Consider the following 176-residue polypeptide: Large ribosomal subunit protein uL10 (176 aa).

Belongs to the universal ribosomal protein uL10 family. Part of the ribosomal stalk of the 50S ribosomal subunit. The N-terminus interacts with L11 and the large rRNA to form the base of the stalk. The C-terminus forms an elongated spine to which L12 dimers bind in a sequential fashion forming a multimeric L10(L12)X complex.

In terms of biological role, forms part of the ribosomal stalk, playing a central role in the interaction of the ribosome with GTP-bound translation factors. The polypeptide is Large ribosomal subunit protein uL10 (Leuconostoc citreum (strain KM20)).